The following is a 239-amino-acid chain: MGASIDDYSLVHKNILHSEDLLKYILETSAYPREHEQLKGLREVTEKHEWSSALVPADEGLFLSMLLKLMNAKRTIEIGVYTGYSLLTTALALPEDGKITAIDVNKSFFEIGLPFIQKAGVEHKINFIESEALPVLDQMLQEMKEEDLYDYAFVDADKSNYANYHERLVKLVRIGGAILYDNTLWYGSVAYPEYPGLHPEEEVARLSFRNLNTFLAADPRVEISQVSIGDGVTIXRRLY.

S-adenosyl-L-methionine is bound by residues valine 55, glutamate 77, 79-80, serine 85, aspartate 103, and alanine 132; that span reads GV. A divalent metal cation is bound at residue aspartate 155. Position 157 (aspartate 157) interacts with S-adenosyl-L-methionine. Residues aspartate 181 and asparagine 182 each contribute to the a divalent metal cation site.

Belongs to the class I-like SAM-binding methyltransferase superfamily. Cation-dependent O-methyltransferase family. Mg(2+) is required as a cofactor.

The catalysed reaction is norbelladine + S-adenosyl-L-methionine = 4'-O-methylnorbelladine + S-adenosyl-L-homocysteine + H(+). It participates in alkaloid biosynthesis. Its function is as follows. 4'-O-methyltransferase converting norbelladine to 4'-O-methylnorbelladine. 4'-O-methylnorbelladine is a precursor to all Amaryllidaceae alkaloids such as galanthamine, lycorine and haemanthamine, and including haemanthamine- and crinamine-type alkaloids, promising anticancer agents. The protein is Norbelladine 4'-O-methyltransferase 3 of Narcissus aff. pseudonarcissus MK-2014 (Daffodil).